The sequence spans 190 residues: Protein GrpE (190 aa).

Positions 1–40 (MAKEKKEEVKEEEVSEATSTEGSTDVESTNNDDLTTETQA) are disordered. Positions 22–40 (GSTDVESTNNDDLTTETQA) are enriched in polar residues.

The protein belongs to the GrpE family. In terms of assembly, homodimer.

The protein localises to the cytoplasm. In terms of biological role, participates actively in the response to hyperosmotic and heat shock by preventing the aggregation of stress-denatured proteins, in association with DnaK and GrpE. It is the nucleotide exchange factor for DnaK and may function as a thermosensor. Unfolded proteins bind initially to DnaJ; upon interaction with the DnaJ-bound protein, DnaK hydrolyzes its bound ATP, resulting in the formation of a stable complex. GrpE releases ADP from DnaK; ATP binding to DnaK triggers the release of the substrate protein, thus completing the reaction cycle. Several rounds of ATP-dependent interactions between DnaJ, DnaK and GrpE are required for fully efficient folding. This Pediococcus pentosaceus (strain ATCC 25745 / CCUG 21536 / LMG 10740 / 183-1w) protein is Protein GrpE.